Consider the following 404-residue polypeptide: Coenzyme F(430) synthetase (404 aa).

Residue 112-117 (GVKGKT) participates in ATP binding.

It belongs to the MurCDEF family.

It carries out the reaction 15,17(3)-seco-F430-17(3)-acid + ATP = coenzyme F430 + ADP + phosphate. In terms of biological role, involved in the biosynthesis of the unique nickel-containing tetrapyrrole coenzyme F430, the prosthetic group of methyl-coenzyme M reductase (MCR), which plays a key role in methanogenesis and anaerobic methane oxidation. Catalyzes the activation the g-propionate side chain of 15,17(3)-seco-F430-17(3)-acid (seco-F430) for intramolecular C-C bond formation to yield the carbocyclic F ring of coenzyme F430. The sequence is that of Coenzyme F(430) synthetase from Methanocaldococcus jannaschii (strain ATCC 43067 / DSM 2661 / JAL-1 / JCM 10045 / NBRC 100440) (Methanococcus jannaschii).